Here is a 399-residue protein sequence, read N- to C-terminus: Mitochondrial glycine transporter (399 aa).

Solcar repeat units lie at residues 35-137 (IPPY…LRSV), 164-251 (LSTT…CKTN), and 266-374 (GNWM…GRSW). Helical transmembrane passes span 41–66 (LAFG…TRLQ), 112–138 (GTAP…RSVA), 170–195 (LLTG…ARFE), 226–249 (GFTA…EACK), 270–296 (VVSA…KTRM), and 349–367 (GLGL…GWSI). Residues 379-399 (EASSSAQEAGTGTRLLDHKQV) are disordered.

This sequence belongs to the mitochondrial carrier (TC 2.A.29) family. SLC25A38 subfamily.

It localises to the mitochondrion inner membrane. It catalyses the reaction glycine(in) = glycine(out). In terms of biological role, mitochondrial glycine transporter that imports glycine into the mitochondrial matrix. Plays an important role in providing glycine for the first enzymatic step in heme biosynthesis, the condensation of glycine with succinyl-CoA to produce 5-aminolevulinate (ALA) in the mitochondrial matrix. The sequence is that of Mitochondrial glycine transporter from Mycosarcoma maydis (Corn smut fungus).